The following is an 89-amino-acid chain: Small ribosomal subunit protein uS15 (89 aa).

This sequence belongs to the universal ribosomal protein uS15 family. As to quaternary structure, part of the 30S ribosomal subunit. Forms a bridge to the 50S subunit in the 70S ribosome, contacting the 23S rRNA.

In terms of biological role, one of the primary rRNA binding proteins, it binds directly to 16S rRNA where it helps nucleate assembly of the platform of the 30S subunit by binding and bridging several RNA helices of the 16S rRNA. Its function is as follows. Forms an intersubunit bridge (bridge B4) with the 23S rRNA of the 50S subunit in the ribosome. The protein is Small ribosomal subunit protein uS15 of Rhodococcus erythropolis (strain PR4 / NBRC 100887).